The sequence spans 89 residues: MGFFKSLNSKPTPKEVAKDRLKLILIHDRGEIAPDIIEKIREEILEVISKYIDIQVEDVEISVNKNGDEEGENTSALIANIPIKSIKGR.

This sequence belongs to the MinE family.

Functionally, prevents the cell division inhibition by proteins MinC and MinD at internal division sites while permitting inhibition at polar sites. This ensures cell division at the proper site by restricting the formation of a division septum at the midpoint of the long axis of the cell. The chain is Cell division topological specificity factor from Clostridium beijerinckii (strain ATCC 51743 / NCIMB 8052) (Clostridium acetobutylicum).